We begin with the raw amino-acid sequence, 411 residues long: Na(+)-translocating NADH-quinone reductase subunit F (411 aa).

Residues 5 to 25 (VILALGIAAFTVIVLVLVAII) traverse the membrane as a helical segment. The region spanning 36-130 (GDITIDINDD…NMEVELPEEI (95 aa)) is the 2Fe-2S ferredoxin-type domain. [2Fe-2S] cluster-binding residues include cysteine 73, cysteine 79, cysteine 82, and cysteine 114. The 141-residue stretch at 133–273 (VKKWECTVIS…SGPFGEFFAK (141 aa)) folds into the FAD-binding FR-type domain.

Belongs to the NqrF family. As to quaternary structure, composed of six subunits; NqrA, NqrB, NqrC, NqrD, NqrE and NqrF. [2Fe-2S] cluster serves as cofactor. It depends on FAD as a cofactor.

Its subcellular location is the cell inner membrane. It carries out the reaction a ubiquinone + n Na(+)(in) + NADH + H(+) = a ubiquinol + n Na(+)(out) + NAD(+). In terms of biological role, NQR complex catalyzes the reduction of ubiquinone-1 to ubiquinol by two successive reactions, coupled with the transport of Na(+) ions from the cytoplasm to the periplasm. The first step is catalyzed by NqrF, which accepts electrons from NADH and reduces ubiquinone-1 to ubisemiquinone by a one-electron transfer pathway. The sequence is that of Na(+)-translocating NADH-quinone reductase subunit F from Haemophilus influenzae (strain 86-028NP).